A 397-amino-acid polypeptide reads, in one-letter code: Decapping and exoribonuclease protein (397 aa).

Residues 1-20 are compositionally biased toward basic and acidic residues; the sequence is MESRGTKREAGKIEVAEPRN. The tract at residues 1–37 is disordered; sequence MESRGTKREAGKIEVAEPRNKLPRPAPSLPTDPALYS. A substrate-binding site is contributed by Arg58. Positions 67–88 are disordered; that stretch reads LRYYSPPPTNGQSPNFDLRDGY. Residues Glu101 and 131–133 each bind substrate; that span reads WRG. Glu192 contacts Mg(2+). Substrate is bound by residues Cys217 and Glu234. The Mg(2+) site is built by Glu234, Asp236, Glu253, and Leu254. Lys255 and Gln280 together coordinate substrate. At Thr392 the chain carries Phosphothreonine. Ser394 carries the phosphoserine modification.

It belongs to the DXO/Dom3Z family. The cofactor is Mg(2+).

The protein resides in the nucleus. The catalysed reaction is a 5'-end triphospho-ribonucleoside in mRNA + H2O = a 5'-end phospho-ribonucleoside in mRNA + diphosphate + H(+). It catalyses the reaction a 5'-end NAD(+)-phospho-ribonucleoside in mRNA + H2O = a 5'-end phospho-ribonucleoside in mRNA + NAD(+) + H(+). The enzyme catalyses a 5'-end NAD(+)-phospho-ribonucleoside in snoRNA + H2O = a 5'-end phospho-ribonucleoside in snoRNA + NAD(+) + H(+). It carries out the reaction a 5'-end (N(7)-methyl 5'-triphosphoguanosine)-ribonucleoside-ribonucleotide in mRNA + H2O = a (N(7)-methyl 5'-triphosphoguanosine)-nucleoside + a 5'-end phospho-ribonucleoside in mRNA + H(+). The catalysed reaction is a 5'-end FAD-phospho-ribonucleoside in mRNA + H2O = a 5'-end phospho-ribonucleoside in mRNA + FAD + H(+). It catalyses the reaction a 5'-end CoA-ribonucleoside in mRNA + H2O = 3'-dephospho-CoA + a 5'-end phospho-ribonucleoside in mRNA + H(+). Its function is as follows. Decapping enzyme for NAD-capped RNAs: specifically hydrolyzes the nicotinamide adenine dinucleotide (NAD) cap from a subset of RNAs by removing the entire NAD moiety from the 5'-end of an NAD-capped RNA. The NAD-cap is present at the 5'-end of some RNAs and snoRNAs. In contrast to the canonical 5'-end N7 methylguanosine (m7G) cap, the NAD cap promotes mRNA decay. Preferentially acts on NAD-capped transcripts in response to environmental stress. Also acts as a non-canonical decapping enzyme that removes the entire cap structure of m7G capped or incompletely capped RNAs and mediates their subsequent degradation. Specifically degrades pre-mRNAs with a defective 5'-end m7G cap and is part of a pre-mRNA capping quality control. Has decapping activity toward incomplete 5'-end m7G cap mRNAs such as unmethylated 5'-end-capped RNA (cap0), while it has no activity toward 2'-O-ribose methylated m7G cap (cap1). In contrast to canonical decapping enzymes DCP2 and NUDT16, which cleave the cap within the triphosphate linkage, the decapping activity releases the entire cap structure GpppN and a 5'-end monophosphate RNA. Also has 5'-3' exoribonuclease activities: The 5'-end monophosphate RNA is then degraded by the 5'-3' exoribonuclease activity, enabling this enzyme to decap and degrade incompletely capped mRNAs. Also possesses RNA 5'-pyrophosphohydrolase activity by hydrolyzing the 5'-end triphosphate to release pyrophosphates. Exhibits decapping activity towards FAD-capped RNAs. Exhibits decapping activity towards dpCoA-capped RNAs in vitro. The chain is Decapping and exoribonuclease protein from Bos taurus (Bovine).